We begin with the raw amino-acid sequence, 487 residues long: Beta-barrel assembly-enhancing protease (487 aa).

Residues 1-27 form the signal peptide; sequence MFRQLKKNLVATLIAAMTIGQVAPAFA. Position 136 (histidine 136) interacts with Zn(2+). Glutamate 137 is a catalytic residue. The Zn(2+) site is built by histidine 140 and glutamate 201. Aspartate 205 (proton donor) is an active-site residue. 4 TPR repeats span residues 309–342, 344–376, 377–409, and 427–460; these read RAAQ…EPGN, WYLD…RTNP, VLQL…NKDD, and DQEL…VKLG.

It belongs to the peptidase M48 family. BepA subfamily. Requires Zn(2+) as cofactor.

The protein resides in the periplasm. Its function is as follows. Functions both as a chaperone and a metalloprotease. Maintains the integrity of the outer membrane by promoting either the assembly or the elimination of outer membrane proteins, depending on their folding state. The protein is Beta-barrel assembly-enhancing protease of Escherichia coli O157:H7.